Here is a 172-residue protein sequence, read N- to C-terminus: Ribosome maturation factor RimM (172 aa).

One can recognise a PRC barrel domain in the interval 94 to 167 (ENEFYLFQLK…FIKVELLPGM (74 aa)).

Belongs to the RimM family. Binds ribosomal protein uS19.

Its subcellular location is the cytoplasm. Its function is as follows. An accessory protein needed during the final step in the assembly of 30S ribosomal subunit, possibly for assembly of the head region. Essential for efficient processing of 16S rRNA. May be needed both before and after RbfA during the maturation of 16S rRNA. It has affinity for free ribosomal 30S subunits but not for 70S ribosomes. This is Ribosome maturation factor RimM from Carboxydothermus hydrogenoformans (strain ATCC BAA-161 / DSM 6008 / Z-2901).